The following is a 339-amino-acid chain: MSTVHEILCKLSLEGDHSTPPSAYGSVKAYTNFDAERDALNIETAIKTKGVDEVTIVNILTNRSNAQRQDIAFAYQRRTKKELASALKSALSGHLETVILGLLKTPAQYDASELKASMKGLGTDEDSLIEIICSRTNQELQEINRVYKEMYKTDLEKDIISDTSGDFRKLMVALAKGRRAEDGSVIDYELIDQDARDLYDAGVKRKGTDVPKWISIMTERSVPHLQKVFDRYKSYSPYDMLESIRKEVKGDLENAFLNLVQCIQNKPLYFADRLYDSMKGKGTRDKVLIRIMVSRSEVDMLKIRSEFKRKYGKSLYYYIQQDTKGDYQKALLYLCGGDD.

Ser2 carries the post-translational modification N-acetylserine. The interval 2–24 is S100A10-binding site; the sequence is STVHEILCKLSLEGDHSTPPSAY. A Phosphotyrosine; by SRC modification is found at Tyr24. Position 26 is a phosphoserine; by PKC (Ser26). 2 Annexin repeats span residues 33-104 and 105-176; these read FDAE…GLLK and TPAQ…ALAK. At Lys49 the chain carries N6-acetyllysine; alternate. Lys49 is covalently cross-linked (Glycyl lysine isopeptide (Lys-Gly) (interchain with G-Cter in SUMO1); alternate). Lys49 is covalently cross-linked (Glycyl lysine isopeptide (Lys-Gly) (interchain with G-Cter in SUMO2); alternate). Lys152 is modified (N6-acetyllysine). Ser184 is subject to Phosphoserine. Annexin repeat units lie at residues 189–261 and 265–336; these read ELID…NLVQ and NKPL…YLCG. The residue at position 199 (Tyr199) is a Phosphotyrosine. Residue Lys227 is modified to N6-acetyllysine.

This sequence belongs to the annexin family. As to quaternary structure, heterotetramer containing 2 light chains of S100A10/p11 and 2 heavy chains of ANXA2/p36. Interacts with ATP1B1. Interacts with DYSF. Interacts with COCH. Interacts (via repeat Annexin 1) with PCSK9 (via the C-terminal domain); the interaction inhibits the degradation of LDLR. Interacts with CEACAM1 (via the cytoplasmic domain); this interaction is regulated by phosphorylation of CEACAM1. Interacts with APPL2 and APPL1; targets APPL2 to endosomes and acting in parallel to RAB5A. Interacts with S100A4. May interact with UBAP2. Interacts with PLEKHG4B; this interaction is required for PLEKHG4B localization to cell-cell adhesions. (Microbial infection) Interacts with human cytomegalovirus (HCMV). In terms of assembly, (Microbial infection) Interacts with M.pneumoniae CARDS toxin; CARDS probably uses this protein as a receptor. A portion of internalized CARDS remains associated with intracellular annexin 2. Post-translationally, phosphorylation of Tyr-24 enhances heat stress-induced translocation to the cell surface. In terms of processing, ISGylated.

It localises to the secreted. The protein localises to the extracellular space. It is found in the extracellular matrix. The protein resides in the basement membrane. Its subcellular location is the melanosome. Calcium-regulated membrane-binding protein whose affinity for calcium is greatly enhanced by anionic phospholipids. It binds two calcium ions with high affinity. May be involved in heat-stress response. Inhibits PCSK9-enhanced LDLR degradation, probably reduces PCSK9 protein levels via a translational mechanism but also competes with LDLR for binding with PCSK9. Binds to endosomes damaged by phagocytosis of particulate wear debris and participates in endosomal membrane stabilization, thereby limiting NLRP3 inflammasome activation. Required for endothelial cell surface plasmin generation and may support fibrinolytic surveillance and neoangiogenesis. Functionally, (Microbial infection) Binds M.pneumoniae CARDS toxin, probably serves as one receptor for this pathogen. When ANXA2 is down-regulated by siRNA, less toxin binds to human cells and less vacuolization (a symptom of M.pneumoniae infection) is seen. The polypeptide is Annexin A2 (ANXA2) (Homo sapiens (Human)).